The sequence spans 475 residues: Ribulose bisphosphate carboxylase large chain (475 aa).

Positions M1–S2 are excised as a propeptide. Position 3 is an N-acetylproline (P3). K14 carries the post-translational modification N6,N6,N6-trimethyllysine. Positions 123 and 173 each coordinate substrate. Catalysis depends on K175, which acts as the Proton acceptor. K177 contributes to the substrate binding site. Positions 201, 203, and 204 each coordinate Mg(2+). At K201 the chain carries N6-carboxylysine. H294 functions as the Proton acceptor in the catalytic mechanism. Substrate-binding residues include R295, H327, and S379.

This sequence belongs to the RuBisCO large chain family. Type I subfamily. In terms of assembly, heterohexadecamer of 8 large chains and 8 small chains; disulfide-linked. The disulfide link is formed within the large subunit homodimers. The cofactor is Mg(2+). Post-translationally, the disulfide bond which can form in the large chain dimeric partners within the hexadecamer appears to be associated with oxidative stress and protein turnover.

It is found in the plastid. The protein localises to the chloroplast. It carries out the reaction 2 (2R)-3-phosphoglycerate + 2 H(+) = D-ribulose 1,5-bisphosphate + CO2 + H2O. The enzyme catalyses D-ribulose 1,5-bisphosphate + O2 = 2-phosphoglycolate + (2R)-3-phosphoglycerate + 2 H(+). RuBisCO catalyzes two reactions: the carboxylation of D-ribulose 1,5-bisphosphate, the primary event in carbon dioxide fixation, as well as the oxidative fragmentation of the pentose substrate in the photorespiration process. Both reactions occur simultaneously and in competition at the same active site. The protein is Ribulose bisphosphate carboxylase large chain of Pinus longaeva (Great Basin bristlecone pine).